Here is a 522-residue protein sequence, read N- to C-terminus: Putative malate dehydrogenase 1B (522 aa).

Residues 495–522 (EETEKSSSEDTPEAAAAAVSTGDETVPS) are disordered.

This sequence belongs to the LDH/MDH superfamily. MDH type 2 family.

The chain is Putative malate dehydrogenase 1B (MDH1B) from Branchiostoma floridae (Florida lancelet).